A 274-amino-acid polypeptide reads, in one-letter code: Glycerol uptake facilitator protein (274 aa).

2 helical membrane passes run 3–23 and 38–58; these read AFWG…GVCA and IVVV…VGGI. The NPA 1 motif lies at 64 to 66; sequence NPA. 3 helical membrane passes run 82–102, 131–151, and 164–184; these read VPVY…IIYL, FANV…ILAI, and IVGF…GYAI. The short motif at 185 to 187 is the NPA 2 element; sequence NPA. Residues 238–258 form a helical membrane-spanning segment; sequence ITSSFWIVSVILVVVLLGLYV.

The protein belongs to the MIP/aquaporin (TC 1.A.8) family.

It is found in the cell membrane. The catalysed reaction is glycerol(in) = glycerol(out). In terms of biological role, mediates glycerol diffusion across the cytoplasmic membrane via a pore-type mechanism. The sequence is that of Glycerol uptake facilitator protein (glpF) from Bacillus subtilis (strain 168).